The chain runs to 215 residues: Probable phosphoglycerate mutase GpmB (215 aa).

Substrate-binding positions include 8 to 15 (RHGESEWN), 21 to 22 (QG), Arg58, Arg60, 82 to 85 (ELHM), and 151 to 152 (GI). The active-site Tele-phosphohistidine intermediate is His9. Glu82 functions as the Proton donor/acceptor in the catalytic mechanism.

This sequence belongs to the phosphoglycerate mutase family. GpmB subfamily.

The enzyme catalyses (2R)-2-phosphoglycerate = (2R)-3-phosphoglycerate. It participates in carbohydrate degradation; glycolysis; pyruvate from D-glyceraldehyde 3-phosphate: step 3/5. The protein is Probable phosphoglycerate mutase GpmB of Photorhabdus laumondii subsp. laumondii (strain DSM 15139 / CIP 105565 / TT01) (Photorhabdus luminescens subsp. laumondii).